A 445-amino-acid polypeptide reads, in one-letter code: Phosphoglucosamine mutase (445 aa).

Residue Ser102 is the Phosphoserine intermediate of the active site. Residues Ser102, Asp241, Asp243, and Asp245 each coordinate Mg(2+). Ser102 bears the Phosphoserine mark.

Belongs to the phosphohexose mutase family. It depends on Mg(2+) as a cofactor. In terms of processing, activated by phosphorylation.

It carries out the reaction alpha-D-glucosamine 1-phosphate = D-glucosamine 6-phosphate. In terms of biological role, catalyzes the conversion of glucosamine-6-phosphate to glucosamine-1-phosphate. This chain is Phosphoglucosamine mutase, found in Shewanella denitrificans (strain OS217 / ATCC BAA-1090 / DSM 15013).